Consider the following 102-residue polypeptide: uncharacterized protein (102 aa).

Residues 1–71 (MKRMIRSHGR…GSANETSACT (71 aa)) form a disordered region. At 1–79 (MKRMIRSHGR…CTRTDHQKAD (79 aa)) the chain is on the extracellular side. Residues 56-71 (SSGTRRGSANETSACT) show a composition bias toward polar residues. The N-linked (GlcNAc...) asparagine; by host glycan is linked to Asn-65. Residues 80–97 (IGLWFMFLVFGLCSWLAM) form a helical membrane-spanning segment. The Cytoplasmic portion of the chain corresponds to 98–102 (RYRAQ).

The protein belongs to the HHV-5 UL15A protein family.

It is found in the host membrane. This is an uncharacterized protein from Human cytomegalovirus (strain AD169) (HHV-5).